A 406-amino-acid polypeptide reads, in one-letter code: Serine/threonine transporter SstT (406 aa).

9 consecutive transmembrane segments (helical) span residues 11 to 31 (IGLVPLIIVGLVLGILIGWLM), 45 to 65 (FVGALKAVAPILVFILVMAAI), 79 to 99 (VLIMYIFGTFLAALTAVVASF), 141 to 161 (AIANANYMGILAWALIIGLAL), 185 to 205 (FVIAFAPIGILGLVANTIAET), 216 to 236 (LLTILVGCMLFIALVVNPIIV), 298 to 318 (MAGAAITINVLTLAAAHTLGV), 330 to 350 (VVATVAACGASGVAGGSLLLI), and 357 to 377 (FNIPNDIAMQVVAIGFIIGVV).

It belongs to the dicarboxylate/amino acid:cation symporter (DAACS) (TC 2.A.23) family.

It localises to the cell inner membrane. It carries out the reaction L-serine(in) + Na(+)(in) = L-serine(out) + Na(+)(out). The enzyme catalyses L-threonine(in) + Na(+)(in) = L-threonine(out) + Na(+)(out). Its function is as follows. Involved in the import of serine and threonine into the cell, with the concomitant import of sodium (symport system). This is Serine/threonine transporter SstT from Psychrobacter sp. (strain PRwf-1).